We begin with the raw amino-acid sequence, 901 residues long: HTH-type transcriptional regulator MalT (901 aa).

39-46 (SPAGYGKT) is a binding site for ATP. Positions 829 to 894 (ELIRTSPLTQ…AAVQHAQKLL (66 aa)) constitute an HTH luxR-type domain. A DNA-binding region (H-T-H motif) is located at residues 853–872 (NEQIAGELEVAATTIKTHIR).

It belongs to the MalT family. In terms of assembly, monomer in solution. Oligomerizes to an active state in the presence of the positive effectors ATP and maltotriose.

With respect to regulation, activated by ATP and maltotriose, which are both required for DNA binding. Functionally, positively regulates the transcription of the maltose regulon whose gene products are responsible for uptake and catabolism of malto-oligosaccharides. Specifically binds to the promoter region of its target genes, recognizing a short DNA motif called the MalT box. The protein is HTH-type transcriptional regulator MalT of Escherichia coli O6:H1 (strain CFT073 / ATCC 700928 / UPEC).